Consider the following 121-residue polypeptide: Ribosome-binding factor A (121 aa).

Belongs to the RbfA family. In terms of assembly, monomer. Binds 30S ribosomal subunits, but not 50S ribosomal subunits or 70S ribosomes.

Its subcellular location is the cytoplasm. Its function is as follows. One of several proteins that assist in the late maturation steps of the functional core of the 30S ribosomal subunit. Associates with free 30S ribosomal subunits (but not with 30S subunits that are part of 70S ribosomes or polysomes). Required for efficient processing of 16S rRNA. May interact with the 5'-terminal helix region of 16S rRNA. The chain is Ribosome-binding factor A from Clostridium kluyveri (strain NBRC 12016).